We begin with the raw amino-acid sequence, 280 residues long: Chlorophyll a-b binding protein CP29 (280 aa).

The tract at residues 1 to 42 (MVFKFPTPPGTQKKAGTTATKPAPKATTKKVATSTGTRSGGV) is disordered. Position 2 is an N-acetylvaline (Val-2). Thr-7 is modified (phosphothreonine; in State 1 and State 2). Positions 10 to 37 (GTQKKAGTTATKPAPKATTKKVATSTGT) are enriched in low complexity. Phosphothreonine; in State 2 is present on Thr-17. Phosphothreonine; in State 1 and State 2 is present on Thr-33. Tyr-47 is a binding site for chlorophyll b. The chlorophyll a site is built by Phe-73 and Ser-79. The residue at position 103 (Ser-103) is a Phosphoserine; in State 2. Residues Glu-137 and His-140 each contribute to the chlorophyll a site. 2 helical membrane passes run 143-163 (WAML…VSWV) and 176-196 (AGLS…ILVG). Ser-183, Glu-199, and Arg-202 together coordinate chlorophyll b. The chlorophyll a site is built by Glu-238, His-241, Arg-243, and Gln-255. A helical membrane pass occupies residues 244 to 264 (LAMVSFFGYGVQALSTGEGAL).

Belongs to the light-harvesting chlorophyll a/b-binding (LHC) protein family. In terms of assembly, the LHC complex consists of chlorophyll a-b binding proteins. Binds at least 14 chlorophylls (8 Chl-a and 6 Chl-b) and carotenoids such as lutein and neoxanthin. is required as a cofactor. Reversible phosphorylation plays a role in the State transition process and determines the affinity of LHCII for PSI and PSII.

The protein localises to the plastid. The protein resides in the chloroplast thylakoid membrane. The light-harvesting complex (LHC) functions as a light receptor, it captures and delivers excitation energy to photosystems with which it is closely associated. CP29 facilitates the State 1 to State 2 transition, where State I is induced by excess photosystem I (PSI) light and State 2 is induced by excess photosystem II (PSII) light. This chain is Chlorophyll a-b binding protein CP29, found in Chlamydomonas reinhardtii (Chlamydomonas smithii).